The following is a 149-amino-acid chain: Azurin (149 aa).

The first 20 residues, methionine 1–alanine 20, serve as a signal peptide directing secretion. The 129-residue stretch at alanine 21–asparagine 149 folds into the Plastocyanin-like domain. A disulfide bridge links cysteine 23 with cysteine 46. Positions 66, 132, 137, and 141 each coordinate Cu cation.

It localises to the periplasm. Its function is as follows. Transfers electrons from cytochrome c551 to cytochrome oxidase. This Achromobacter denitrificans (Alcaligenes denitrificans) protein is Azurin (azu).